Reading from the N-terminus, the 359-residue chain is Insulin gene enhancer protein isl-2a (359 aa).

LIM zinc-binding domains are found at residues 27-80 and 30-143; these read CVGC…CKRD and CGSQ…RADH. The tract at residues 171-190 is disordered; it reads EPVPVRQPPHRNHVHKQSEK. Positions 191–250 form a DNA-binding region, homeobox; it reads TTRVRTVLNEKQLHTLRTCYNANPRPDALMKEQLVEMTGLSPRVIRVWFQNKRCKDKKKS. Residues 326–336 show a composition bias toward low complexity; the sequence is ESGSLGNSSGS. Residues 326 to 359 form a disordered region; it reads ESGSLGNSSGSDVTSLSSQLPDTPNSMVPSPVET. A compositionally biased stretch (polar residues) spans 337–359; that stretch reads DVTSLSSQLPDTPNSMVPSPVET.

It is found in the nucleus. Functionally, binds to one of the cis-acting domain of the insulin gene enhancer. May be involved in subtype specialization of primary motoneurons. This Danio rerio (Zebrafish) protein is Insulin gene enhancer protein isl-2a (isl2a).